Consider the following 542-residue polypeptide: Chitinase 2 (542 aa).

The first 22 residues, M1–A22, serve as a signal peptide directing secretion. Residues P29 to G314 form the GH18 domain. Residue E166 is the Proton donor of the active site. Residues H312–P356 are disordered. Over residues S323–S354 the composition is skewed to low complexity. The chitin-binding, high affinity stretch occupies residues C355 to C406. A propeptide spanning residues A447 to K542 is cleaved from the precursor.

The protein belongs to the glycosyl hydrolase 18 family. Chitinase class III subfamily. Monomer. O-glycosylated.

It is found in the secreted. The catalysed reaction is Random endo-hydrolysis of N-acetyl-beta-D-glucosaminide (1-&gt;4)-beta-linkages in chitin and chitodextrins.. Functionally, probably involved in the apical growth and branching of fungal hyphae. In Rhizopus oligosporus (Rhizopus microsporus var. oligosporus), this protein is Chitinase 2 (CHI2).